Reading from the N-terminus, the 1088-residue chain is Calcium-transporting ATPase 5, plasma membrane-type (1088 aa).

Over residues 1–11 (MESASSSLATS) the composition is skewed to low complexity. The segment at 1–32 (MESASSSLATSGRRRSSSGGGGGSWGSIGSAA) is disordered. At 1-198 (MESASSSLAT…FLWDACKDLT (198 aa)) the chain is on the cytoplasmic side. Residues 199-219 (LIILMVAAAVSLALGITTEGI) form a helical membrane-spanning segment. Residues 220 to 221 (KE) lie on the Extracellular side of the membrane. The chain crosses the membrane as a helical span at residues 222-242 (GWYDGASIAFAVLLVVVVTAT). Residues 243-338 (SDYKQSLQFQ…MSGCKVADGY (96 aa)) are Cytoplasmic-facing. The chain crosses the membrane as a helical span at residues 339–359 (GTMLVTAVGINTEWGLLMASI). Residues 360–375 (SEDSGEETPLQVRLNG) lie on the Extracellular side of the membrane. The helical transmembrane segment at 376–396 (VATFIGMVGLSVALAVLVVLL) threads the bilayer. Topologically, residues 397–425 (ARYFTGHTYNPDGSVQYVKGKMGVGQTIR) are cytoplasmic. A helical transmembrane segment spans residues 426–446 (GIVGIFTVAVTIVVVAVPEGL). Residues 447–851 (PLAVTLTLAF…GRSVYANIQK (405 aa)) are Extracellular-facing. Asp-486 (4-aspartylphosphate intermediate) is an active-site residue. N-linked (GlcNAc...) asparagine glycans are attached at residues Asn-532, Asn-569, and Asn-737. Residues Asp-794 and Asp-798 each contribute to the Mg(2+) site. A helical membrane pass occupies residues 852-872 (FIQFQLTVNVAALIINVVAAV). Over 873–880 (SSGNVPLN) the chain is Cytoplasmic. The helical transmembrane segment at 881-901 (AVQLLWVNLIMDTLGALALAT) threads the bilayer. Residues 902-919 (EPPTDHLMQRPPVGRREP) lie on the Extracellular side of the membrane. Residues 920-940 (LITNVMWRNLIIMALFQVIVL) traverse the membrane as a helical segment. At 941 to 1000 (LTLNFRGTSLLQLKNDNQAHADKVKNTFIFNTFVLCQVFNEFNARKPDELNIFKGITGNH) the chain is on the cytoplasmic side. The helical transmembrane segment at 1001–1021 (LFMAIVAITVVLQALIVEFLG) threads the bilayer. The Extracellular portion of the chain corresponds to 1022-1030 (KFTSTTRLT). A helical membrane pass occupies residues 1031–1051 (WQLWLVSIGLAFFSWPLAFVG). Over 1052–1088 (KLIPVPERPLGDFFACCCPGSKQAADAKGDDADHSDV) the chain is Cytoplasmic.

The protein belongs to the cation transport ATPase (P-type) (TC 3.A.3) family. Type IIB subfamily. As to quaternary structure, interacts with NOH1.

The protein localises to the cell membrane. The catalysed reaction is Ca(2+)(in) + ATP + H2O = Ca(2+)(out) + ADP + phosphate + H(+). Activated by calmodulin. This magnesium-dependent enzyme catalyzes the hydrolysis of ATP coupled with the translocation of calcium from the cytosol out of the cell, into the endoplasmic reticulum, or into organelles. Involved in salt and drought stress tolerance. Involved in cold stress tolerance. This is Calcium-transporting ATPase 5, plasma membrane-type from Oryza sativa subsp. japonica (Rice).